The following is a 187-amino-acid chain: Aminodeoxychorismate synthase component 2 (187 aa).

The Glutamine amidotransferase type-1 domain occupies 1 to 187; it reads MILLIDNYDS…HQLLANFLNR (187 aa). Catalysis depends on residues cysteine 79, histidine 168, and glutamate 170.

In terms of assembly, monomer. Heterodimer consisting of two non-identical subunits: a glutamine amidotransferase subunit (PabA) and a aminodeoxychorismate synthase subunit (PabB).

The enzyme catalyses chorismate + L-glutamine = 4-amino-4-deoxychorismate + L-glutamate. Its pathway is cofactor biosynthesis; tetrahydrofolate biosynthesis; 4-aminobenzoate from chorismate: step 1/2. In terms of biological role, part of a heterodimeric complex that catalyzes the two-step biosynthesis of 4-amino-4-deoxychorismate (ADC), a precursor of p-aminobenzoate (PABA) and tetrahydrofolate. In the first step, a glutamine amidotransferase (PabA) generates ammonia as a substrate that, along with chorismate, is used in the second step, catalyzed by aminodeoxychorismate synthase (PabB) to produce ADC. PabA converts glutamine into glutamate only in the presence of stoichiometric amounts of PabB. This is Aminodeoxychorismate synthase component 2 (pabA) from Klebsiella aerogenes (Enterobacter aerogenes).